A 331-amino-acid polypeptide reads, in one-letter code: Nucleotide sugar transporter SLC35B4 (331 aa).

11 helical membrane passes run A4–L24, G30–F50, P59–V79, L92–L112, S117–M137, G153–M173, A201–F221, I229–T249, Y251–L267, T268–F288, and P291–T311. A Mediates endoplasmic reticulum retention motif is present at residues K326–N331.

This sequence belongs to the nucleotide-sugar transporter family. SLC35B subfamily.

The protein resides in the endoplasmic reticulum membrane. It carries out the reaction UDP-N-acetyl-alpha-D-glucosamine(in) + UDP-alpha-D-glucuronate(out) = UDP-N-acetyl-alpha-D-glucosamine(out) + UDP-alpha-D-glucuronate(in). The catalysed reaction is UDP-alpha-D-xylose(in) + UDP-alpha-D-glucuronate(out) = UDP-alpha-D-xylose(out) + UDP-alpha-D-glucuronate(in). Its function is as follows. Antiporter that transports nucleotide sugars across the endoplasmic reticulum (ER) membrane in exchange for another nucleotide sugar. May couple UDP-alpha-D-glucuronate (UDP-GlcA) or UDP-alpha-D-xylose (UDP-Xyl) efflux to UDP-alpha-D-glucuronate (UDP-GlcA) influx into the ER lumen, which in turn stimulates glucuronidation and excretion of endobiotics and xenobiotics. This is Nucleotide sugar transporter SLC35B4 (SLC35B4) from Macaca fascicularis (Crab-eating macaque).